The chain runs to 167 residues: Bacterial non-heme ferritin (167 aa).

The region spanning 1–145 is the Ferritin-like diiron domain; sequence MLSKDIIKLL…DILDKIELIG (145 aa). The Fe cation site is built by glutamate 17, glutamate 50, histidine 53, glutamate 94, and glutamine 127.

The protein belongs to the ferritin family. Prokaryotic subfamily. In terms of assembly, homooligomer of 24 subunits that assemble into a spherical protein shell (12 +/- 1 nM diameter) that can sequester at least 2000 iron atoms.

The protein localises to the cytoplasm. It catalyses the reaction 4 Fe(2+) + O2 + 6 H2O = 4 iron(III) oxide-hydroxide + 12 H(+). Iron-storage protein. This is Bacterial non-heme ferritin (ftnA) from Helicobacter pylori (strain ATCC 700392 / 26695) (Campylobacter pylori).